A 515-amino-acid polypeptide reads, in one-letter code: Protein FAM98A (515 aa).

Disordered stretches follow at residues 297 to 410 and 432 to 515; these read VLMG…GYHG and SGYQ…HYTS. Positions 302-311 are enriched in basic and acidic residues; sequence VPDRGGRPNE. Positions 382-394 are enriched in gly residues; it reads WTDGGSGSGGGYQ. A compositionally biased stretch (basic and acidic residues) spans 444 to 456; that stretch reads RYQDGGHHGERGS. Gly residues predominate over residues 457-481; sequence GRGGRGGRGGRGGRGSQGGGWGGRG. The segment covering 485–501 has biased composition (low complexity); it reads YHQGGQFEQHFQHGGYQ. Polar residues predominate over residues 502–515; the sequence is YSHSGFGQGRHYTS.

Belongs to the FAM98 family. In terms of assembly, interacts (via N- and C-terminus) with DDX1. Interacts (via N- and C-terminus) with C14orf166. Interacts with FAM98B. Interacts with PLEKHM1 (via N- and C-terminus).

Positively stimulates PRMT1-induced protein arginine methylation. Involved in skeletal homeostasis. Positively regulates lysosome peripheral distribution and ruffled border formation in osteoclasts. The chain is Protein FAM98A from Mus musculus (Mouse).